We begin with the raw amino-acid sequence, 375 residues long: Alcohol dehydrogenase 6 (375 aa).

Position 23 is a phosphoserine (serine 23). Residues cysteine 47, histidine 69, cysteine 99, cysteine 102, cysteine 105, cysteine 113, and cysteine 175 each contribute to the Zn(2+) site. NAD(+) contacts are provided by residues 200-205, aspartate 224, lysine 229, 293-295, and arginine 370; these read GLGGVG and VGL.

Belongs to the zinc-containing alcohol dehydrogenase family. Class-V subfamily. In terms of assembly, dimer. The cofactor is Zn(2+).

Its subcellular location is the cytoplasm. It catalyses the reaction a primary alcohol + NAD(+) = an aldehyde + NADH + H(+). The catalysed reaction is a secondary alcohol + NAD(+) = a ketone + NADH + H(+). Its function is as follows. Alcohol dehydrogenase. Catalyzes the NAD-dependent oxidation of primary alcohols to the corresponding aldehydes. Oxidizes secondary alcohols to the corresponding ketones. The polypeptide is Alcohol dehydrogenase 6 (ADH6) (Pongo abelii (Sumatran orangutan)).